Reading from the N-terminus, the 317-residue chain is Methionyl-tRNA formyltransferase (317 aa).

Position 112-115 (112-115 (SLLP)) interacts with (6S)-5,6,7,8-tetrahydrofolate.

The protein belongs to the Fmt family.

The enzyme catalyses L-methionyl-tRNA(fMet) + (6R)-10-formyltetrahydrofolate = N-formyl-L-methionyl-tRNA(fMet) + (6S)-5,6,7,8-tetrahydrofolate + H(+). Attaches a formyl group to the free amino group of methionyl-tRNA(fMet). The formyl group appears to play a dual role in the initiator identity of N-formylmethionyl-tRNA by promoting its recognition by IF2 and preventing the misappropriation of this tRNA by the elongation apparatus. In Histophilus somni (strain 129Pt) (Haemophilus somnus), this protein is Methionyl-tRNA formyltransferase.